The following is a 1036-amino-acid chain: MQYLNFPRMPNIMMFLEVAILCLWVVADASASSAKFGSTTPASAQQSDVELEPINGTLNYRLYAKKGRDDKPWFDGLDSRHIQCVRRARCYPTSNATNTCFGSKLPYELSSLDLTDFHTEKELNDKLNDYYALKHVPKCWAAIQPFLCAVFKPKCEKINGEDMVYLPSYEMCRITMEPCRILYNTTFFPKFLRCNETLFPTKCTNGARGMKFNGTGQCLSPLVPTDTSASYYPGIEGCGVRCKDPLYTDDEHRQIHKLIGWAGSICLLSNLFVVSTFFIDWKNANKYPAVIVFYINLCFLIACVGWLLQFTSGSREDIVCRKDGTLRHSEPTAGENLSCIVIFVLVYYFLTAGMVWFVFLTYAWHWRAMGHVQDRIDKKGSYFHLVAWSLPLVLTITTMAFSEVDGNSIVGICFVGYINHSMRAGLLLGPLCGVILIGGYFITRGMVMLFGLKHFANDIKSTSASNKIHLIIMRMGVCALLTLVFILVAIACHVTEFRHADEWAQSFRQFIICKISSVFEEKSSCRIENRPSVGVLQLHLLCLFSSGIVMSTWCWTPSSIETWKRYIRKKCGKEVVEEVKMPKHKVIAQTWAKRKDFEDKGRLSITLYNTHTDPVGLNFDVNDLNSSETNDISSTWAAYLPQCVKRRMALTGAATGNSSSHGPRKNSLDSEISVSVRHVSVESRRNSVDSQVSVKIAEMKTKVASRSRGKHGGSSSNRRTQRRRDYIAAATGKSSRRRESSTSVESQVIALKKTTYPNASHKVGVFAHHSSKKQHNYTSSMKRRTANAGLDPSILNEFLQKNGDFIFPFLQNQDMSSSSEEDNSRASQKIQDLNVVVKQQEISEDDHDGIKIEELPNSKQVALENFLKNIKKSNESNSNRHSRNSARSQSKKSQKRHLKNPAADLDFRKDCVKYRSNDSLSCSSEELDVALDVGSLLNSSFSGISMGKPHSRNSKTSCDVGIQANPFELVPSYGEDELQQAMRLLNAASRQRTEAANEDFGGTELQGLLGHSHRHQREPTFMSESDKLKMLLLPSK.

The N-terminal stretch at 1 to 31 (MQYLNFPRMPNIMMFLEVAILCLWVVADASA) is a signal peptide. The Extracellular portion of the chain corresponds to 32 to 258 (SSAKFGSTTP…DDEHRQIHKL (227 aa)). 2 N-linked (GlcNAc...) asparagine glycosylation sites follow: asparagine 55 and asparagine 95. The FZ domain occupies 85-206 (VRRARCYPTS…TLFPTKCTNG (122 aa)). 4 cysteine pairs are disulfide-bonded: cysteine 90–cysteine 155, cysteine 100–cysteine 148, cysteine 139–cysteine 179, and cysteine 172–cysteine 194. Asparagine 184, asparagine 195, and asparagine 213 each carry an N-linked (GlcNAc...) asparagine glycan. 2 disulfide bridges follow: cysteine 218–cysteine 238 and cysteine 242–cysteine 320. A helical membrane pass occupies residues 259–279 (IGWAGSICLLSNLFVVSTFFI). The Cytoplasmic portion of the chain corresponds to 280–287 (DWKNANKY). The chain crosses the membrane as a helical span at residues 288-308 (PAVIVFYINLCFLIACVGWLL). Over 309 to 339 (QFTSGSREDIVCRKDGTLRHSEPTAGENLSC) the chain is Extracellular. An N-linked (GlcNAc...) asparagine glycan is attached at asparagine 336. Cysteine 339 and cysteine 413 are oxidised to a cystine. The helical transmembrane segment at 340 to 360 (IVIFVLVYYFLTAGMVWFVFL) threads the bilayer. At 361–381 (TYAWHWRAMGHVQDRIDKKGS) the chain is on the cytoplasmic side. A helical membrane pass occupies residues 382 to 402 (YFHLVAWSLPLVLTITTMAFS). Residues 403 to 421 (EVDGNSIVGICFVGYINHS) lie on the Extracellular side of the membrane. An N-linked (GlcNAc...) asparagine glycan is attached at asparagine 419. A helical membrane pass occupies residues 422 to 442 (MRAGLLLGPLCGVILIGGYFI). The Cytoplasmic segment spans residues 443-469 (TRGMVMLFGLKHFANDIKSTSASNKIH). A helical membrane pass occupies residues 470-490 (LIIMRMGVCALLTLVFILVAI). At 491–532 (ACHVTEFRHADEWAQSFRQFIICKISSVFEEKSSCRIENRPS) the chain is on the extracellular side. The cysteines at positions 513 and 525 are disulfide-linked. A helical transmembrane segment spans residues 533–553 (VGVLQLHLLCLFSSGIVMSTW). Over 554–1036 (CWTPSSIETW…KLKMLLLPSK (483 aa)) the chain is Cytoplasmic. Serine 658, serine 659, serine 667, serine 670, serine 673, serine 687, serine 690, and serine 693 each carry phosphoserine. 2 disordered regions span residues 678 to 745 (HVSV…TSVE) and 870 to 902 (IKKS…KNPA). Over residues 880-899 (RHSRNSARSQSKKSQKRHLK) the composition is skewed to basic residues.

It belongs to the G-protein coupled receptor Fz/Smo family. In terms of assembly, interacts with cos. Post-translationally, phosphorylation by CkIalpha and PKA regulates smo accumulation at the cell surface and its signaling activity in response to hh. Expressed in olfactory sensory neurons (at protein level).

The protein localises to the cell membrane. Its subcellular location is the cell projection. It is found in the cilium. Its function is as follows. Segment polarity protein required for correct patterning of every segment. G protein-coupled receptor which associates with the patched protein (ptc) to transduce the hedgehog (hh) signal through the activation of an inhibitory G-protein. In the absence of hh, ptc represses the constitutive signaling activity of smo through fused (fu). Essential component of a hh-signaling pathway which regulates the Duox-dependent gut immune response to bacterial uracil; required to activate Cad99C-dependent endosome formation, norpA-dependent Ca2+ mobilization and p38 MAPK, which are essential steps in the Duox-dependent production of reactive oxygen species (ROS) in response to intestinal bacterial infection. In Drosophila melanogaster (Fruit fly), this protein is Protein smoothened (smo).